The following is a 117-amino-acid chain: Large ribosomal subunit protein bL20 (117 aa).

The protein belongs to the bacterial ribosomal protein bL20 family.

Its function is as follows. Binds directly to 23S ribosomal RNA and is necessary for the in vitro assembly process of the 50S ribosomal subunit. It is not involved in the protein synthesizing functions of that subunit. The sequence is that of Large ribosomal subunit protein bL20 from Mesomycoplasma hyopneumoniae (strain 232) (Mycoplasma hyopneumoniae).